The chain runs to 515 residues: Phenylalanine--tRNA ligase beta subunit (515 aa).

The region spanning 263-334 is the B5 domain; that stretch reads HEYVKIYVDE…IVMGYNQMPR (72 aa). Mg(2+)-binding residues include N312, D318, E321, and D322.

It belongs to the phenylalanyl-tRNA synthetase beta subunit family. Type 2 subfamily. Tetramer of two alpha and two beta subunits. Requires Mg(2+) as cofactor.

It is found in the cytoplasm. The enzyme catalyses tRNA(Phe) + L-phenylalanine + ATP = L-phenylalanyl-tRNA(Phe) + AMP + diphosphate + H(+). In Pyrobaculum aerophilum (strain ATCC 51768 / DSM 7523 / JCM 9630 / CIP 104966 / NBRC 100827 / IM2), this protein is Phenylalanine--tRNA ligase beta subunit.